We begin with the raw amino-acid sequence, 495 residues long: 3-octaprenyl-4-hydroxybenzoate carboxy-lyase (495 aa).

Position 171 (Asn-171) interacts with Mn(2+). Prenylated FMN-binding positions include 174 to 176, 188 to 190, and 193 to 194; these read IYR, RWL, and RG. Glu-237 contributes to the Mn(2+) binding site. Catalysis depends on Asp-286, which acts as the Proton donor.

It belongs to the UbiD family. Homohexamer. Prenylated FMN serves as cofactor. Requires Mn(2+) as cofactor.

It localises to the cell membrane. It carries out the reaction a 4-hydroxy-3-(all-trans-polyprenyl)benzoate + H(+) = a 2-(all-trans-polyprenyl)phenol + CO2. Its pathway is cofactor biosynthesis; ubiquinone biosynthesis. Catalyzes the decarboxylation of 3-octaprenyl-4-hydroxy benzoate to 2-octaprenylphenol, an intermediate step in ubiquinone biosynthesis. This is 3-octaprenyl-4-hydroxybenzoate carboxy-lyase from Hamiltonella defensa subsp. Acyrthosiphon pisum (strain 5AT).